The primary structure comprises 219 residues: Large ribosomal subunit protein uL3 (219 aa).

Belongs to the universal ribosomal protein uL3 family. As to quaternary structure, part of the 50S ribosomal subunit. Forms a cluster with proteins L14 and L19.

Its function is as follows. One of the primary rRNA binding proteins, it binds directly near the 3'-end of the 23S rRNA, where it nucleates assembly of the 50S subunit. This is Large ribosomal subunit protein uL3 from Corynebacterium kroppenstedtii (strain DSM 44385 / JCM 11950 / CIP 105744 / CCUG 35717).